The sequence spans 436 residues: 3-phosphoshikimate 1-carboxyvinyltransferase (436 aa).

Positions 22, 23, and 27 each coordinate 3-phosphoshikimate. Lys22 contacts phosphoenolpyruvate. Phosphoenolpyruvate is bound by residues Gly95 and Arg123. 3-phosphoshikimate contacts are provided by Ser170, Ser171, Gln172, Ser201, Asp322, and Lys349. Residue Gln172 participates in phosphoenolpyruvate binding. The active-site Proton acceptor is Asp322. 3 residues coordinate phosphoenolpyruvate: Arg353, Arg397, and Lys422.

This sequence belongs to the EPSP synthase family. Monomer.

The protein resides in the cytoplasm. It carries out the reaction 3-phosphoshikimate + phosphoenolpyruvate = 5-O-(1-carboxyvinyl)-3-phosphoshikimate + phosphate. Its pathway is metabolic intermediate biosynthesis; chorismate biosynthesis; chorismate from D-erythrose 4-phosphate and phosphoenolpyruvate: step 6/7. In terms of biological role, catalyzes the transfer of the enolpyruvyl moiety of phosphoenolpyruvate (PEP) to the 5-hydroxyl of shikimate-3-phosphate (S3P) to produce enolpyruvyl shikimate-3-phosphate and inorganic phosphate. The chain is 3-phosphoshikimate 1-carboxyvinyltransferase from Ralstonia nicotianae (strain ATCC BAA-1114 / GMI1000) (Ralstonia solanacearum).